A 1072-amino-acid polypeptide reads, in one-letter code: Integrin alpha-6 (1072 aa).

Positions Met1–Ala18 are cleaved as a signal peptide. The Extracellular segment spans residues Phe19–Thr1010. FG-GAP repeat units follow at residues Ala23 to Cys88, Asp94 to Asp160, Asp170 to Leu223, Arg238 to Leu295, Ser296 to Gly357, Ile358 to Thr413, and Glu414 to Asp476. Asn71 carries an N-linked (GlcNAc...) asparagine glycan. 3 disulfides stabilise this stretch: Cys79-Cys88, Cys125-Cys148, and Cys169-Cys182. Residues Asn217 and Asn278 are each glycosylated (N-linked (GlcNAc...) asparagine). 4 residues coordinate Ca(2+): Asp318, Asn320, Asp322, and Asp326. The N-linked (GlcNAc...) asparagine glycan is linked to Asn364. The Ca(2+) site is built by Asp380, Asn382, Asp384, Tyr386, Asp388, Asp438, Asp440, Asn442, Tyr444, and Asp446. A disulfide bridge links Cys498 with Cys557. Asn515 and Asn609 each carry an N-linked (GlcNAc...) asparagine glycan. 2 disulfides stabilise this stretch: Cys625/Cys631 and Cys725/Cys736. N-linked (GlcNAc...) asparagine glycans are attached at residues Asn730, Asn747, and Asn780. 2 disulfides stabilise this stretch: Cys880–Cys927 and Cys933–Cys938. Asn957 is a glycosylation site (N-linked (GlcNAc...) asparagine). The chain crosses the membrane as a helical span at residues Gly1011–Trp1036. Residues Lys1037–Ala1072 are Cytoplasmic-facing. Residue Cys1038 is the site of S-palmitoyl cysteine; by DHHC3 attachment. The short motif at Gly1039–Arg1043 is the GFFKR motif element. At Ser1070 the chain carries Phosphoserine; by CaMK2.

Belongs to the integrin alpha chain family. In terms of assembly, heterodimer of an alpha and a beta subunit. The alpha subunit is composed of a heavy and a light chain linked by a disulfide bond. Alpha-6 associates with either beta-1 (ITGB1) or beta-4 (ITGB4) to form ITGA6:ITGB1 and ITGA6:ITGB4, respectively. Post-translationally, phosphorylated in vivo.

It localises to the cell membrane. Its function is as follows. Integrin alpha-6/beta-1 (ITGA6:ITGB1) is a receptor for laminin on platelets. Integrin alpha-6/beta-1 (ITGA6:ITGB1) is present in oocytes and is involved in sperm-egg fusion. Integrin alpha-6/beta-4 (ITGA6:ITGB4) is a receptor for laminin in epithelial cells and it plays a critical structural role in the hemidesmosome. This chain is Integrin alpha-6 (ITGA6), found in Gallus gallus (Chicken).